We begin with the raw amino-acid sequence, 463 residues long: Sodium-coupled neutral amino acid transporter 7 (463 aa).

Ser-28 carries the post-translational modification Phosphoserine. A run of 11 helical transmembrane segments spans residues 56-76 (AVFI…PAAF), 82-102 (VAAG…GLVI), 130-150 (LCEV…LIII), 179-199 (FTIS…KEIG), 206-226 (FLSV…YIWP), 240-260 (ASWM…QCHV), 283-303 (AAMV…FLTF), 320-340 (VAVA…YPIL), 372-392 (VLQT…IPDI), 396-416 (ISVI…LCLI), and 429-449 (ASWW…AFIF).

This sequence belongs to the amino acid/polyamine transporter 2 family. Interacts with the mTORC1 complex; this interaction mediates the recruitment of mTORC1 to the lysosome and its subsequent activation. Highly expressed in the brain, including the hippocampus, especially in the granular layer of dentate gyrus cells and the pyramidal cell layer of the hippocampus, amygdala, thalamus, hypothalamus, in the layer of Purkinje cells in the cerebellum and the layers of cortex. Particularly strong expression in neurons of the ventromedial hypothalamus, basolateral amygdala, ventral tegmental area, and locus coeruleus. Not detected in glial cells, including astrocytes. In addition to brain, also expressed in the spinal cord (at protein level).

The protein localises to the lysosome membrane. It is found in the cell projection. The protein resides in the axon. The enzyme catalyses L-glutamine(in) + Na(+)(in) = L-glutamine(out) + Na(+)(out). The catalysed reaction is L-asparagine(in) + Na(+)(in) = L-asparagine(out) + Na(+)(out). In terms of biological role, symporter that selectively cotransports sodium ions and amino acids, such as L-glutamine and L-asparagine from the lysosome into the cytoplasm and may participates in mTORC1 activation. The transport activity requires an acidic lysosomal lumen. This Mus musculus (Mouse) protein is Sodium-coupled neutral amino acid transporter 7.